A 181-amino-acid polypeptide reads, in one-letter code: Small ribosomal subunit protein bS16 (181 aa).

Residues 150–181 are disordered; that stretch reads KKAAEEAAKAAAEAPAEEAAPAEEAATEAAAE. The span at 158–181 shows a compositional bias: low complexity; the sequence is KAAAEAPAEEAAPAEEAATEAAAE.

This sequence belongs to the bacterial ribosomal protein bS16 family.

This chain is Small ribosomal subunit protein bS16, found in Bacteroides fragilis (strain ATCC 25285 / DSM 2151 / CCUG 4856 / JCM 11019 / LMG 10263 / NCTC 9343 / Onslow / VPI 2553 / EN-2).